Here is a 250-residue protein sequence, read N- to C-terminus: Glycerol-1-phosphate phosphohydrolase 2 (250 aa).

The active-site Nucleophile is D18. Mg(2+) is bound by residues D18 and D20. Catalysis depends on D20, which acts as the Proton donor. K64 participates in a covalent cross-link: Glycyl lysine isopeptide (Lys-Gly) (interchain with G-Cter in ubiquitin). S90 is subject to Phosphoserine. K144 participates in a covalent cross-link: Glycyl lysine isopeptide (Lys-Gly) (interchain with G-Cter in ubiquitin). D179 is a binding site for Mg(2+).

This sequence belongs to the HAD-like hydrolase superfamily. DOG/GPP family. As to quaternary structure, monomer. The cofactor is Mg(2+).

Its subcellular location is the cytoplasm. It localises to the nucleus. It carries out the reaction sn-glycerol 1-phosphate + H2O = glycerol + phosphate. The enzyme catalyses sn-glycerol 3-phosphate + H2O = glycerol + phosphate. Its function is as follows. Glycerol-1-phosphate phosphohydrolase involved in glycerol biosynthesis. Plays a role in osmoadaptation. This Saccharomyces cerevisiae (strain ATCC 204508 / S288c) (Baker's yeast) protein is Glycerol-1-phosphate phosphohydrolase 2.